The primary structure comprises 368 residues: Phosphate acyltransferase (368 aa).

The segment at 337 to 368 is disordered; that stretch reads LGDGEHDAGGAGQASPAAGHHAEPSAAQSSKA.

Belongs to the PlsX family. Homodimer. Probably interacts with PlsY.

It is found in the cytoplasm. It catalyses the reaction a fatty acyl-[ACP] + phosphate = an acyl phosphate + holo-[ACP]. It functions in the pathway lipid metabolism; phospholipid metabolism. In terms of biological role, catalyzes the reversible formation of acyl-phosphate (acyl-PO(4)) from acyl-[acyl-carrier-protein] (acyl-ACP). This enzyme utilizes acyl-ACP as fatty acyl donor, but not acyl-CoA. This chain is Phosphate acyltransferase, found in Burkholderia orbicola (strain MC0-3).